Consider the following 401-residue polypeptide: MKKKRVILAYSGGLDTSIIVRWLTEKGYEVITYTADVGQGEELSEIPEKARRAGAIEAIVEDLKETFAENYCLPTLRALALYEGKYPLTAALSRPLIAERLVYYAEKFNADYVAHGSTGKGNDQVRFELSVWALNPDIEVLAPVREWEFKSREEQVEYAQRFNIPVKATKEKPYSIDRNLWGVSIECGPLEDPWQEPPQDAYQITQSPEEAPDEPEYVTVGFEKGKPVYLNGERYEEQWKLIANLNEIAGRHGVGRIDMVENRLVGIKSREIYEAPGAMVLYEAYRDLLSLVLDRFTFHYFLTHIPHEYAKLVYEGLWFTPLREALDAFTNKIAEFATGEVRLKLYKGSVSVVGRRSPNSLYVEELATYSEKDQFDQIAGKHFTKVWGLPLKVLGRVRKGK.

ATP is bound by residues 9–17 (AYSGGLDTS) and Ala35. Tyr86 contributes to the L-citrulline binding site. Residue Gly116 participates in ATP binding. L-aspartate is bound by residues Thr118, Asn122, and Asp123. Position 122 (Asn122) interacts with L-citrulline. The L-citrulline site is built by Arg126, Ser175, Ser184, Glu261, and Tyr273.

This sequence belongs to the argininosuccinate synthase family. Type 1 subfamily. Homotetramer.

The protein localises to the cytoplasm. It carries out the reaction L-citrulline + L-aspartate + ATP = 2-(N(omega)-L-arginino)succinate + AMP + diphosphate + H(+). It participates in amino-acid biosynthesis; L-arginine biosynthesis; L-arginine from L-ornithine and carbamoyl phosphate: step 2/3. The polypeptide is Argininosuccinate synthase (Aquifex aeolicus (strain VF5)).